A 326-amino-acid chain; its full sequence is tRNA-modifying protein YgfZ (326 aa).

2 residues coordinate folate: Trp27 and Trp189.

This sequence belongs to the tRNA-modifying YgfZ family.

It localises to the cytoplasm. Functionally, folate-binding protein involved in regulating the level of ATP-DnaA and in the modification of some tRNAs. It is probably a key factor in regulatory networks that act via tRNA modification, such as initiation of chromosomal replication. The sequence is that of tRNA-modifying protein YgfZ from Escherichia coli (strain SMS-3-5 / SECEC).